The sequence spans 413 residues: Histidine--tRNA ligase (413 aa).

This sequence belongs to the class-II aminoacyl-tRNA synthetase family. Homodimer.

The protein localises to the cytoplasm. The catalysed reaction is tRNA(His) + L-histidine + ATP = L-histidyl-tRNA(His) + AMP + diphosphate + H(+). The polypeptide is Histidine--tRNA ligase (Ehrlichia canis (strain Jake)).